The following is a 704-amino-acid chain: Polyribonucleotide nucleotidyltransferase (704 aa).

The Mg(2+) site is built by Asp-485 and Asp-491. The 60-residue stretch at 552-611 folds into the KH domain; that stretch reads PKILTMTINPDKIRDVIGPSGKMINKIIEDTGVKIDIEQDGTIYISSADTNMNNKAREII. An S1 motif domain is found at 621-689; that stretch reads GQMYLGTVKR…NQGRVNLSRK (69 aa).

It belongs to the polyribonucleotide nucleotidyltransferase family. Mg(2+) is required as a cofactor.

Its subcellular location is the cytoplasm. It catalyses the reaction RNA(n+1) + phosphate = RNA(n) + a ribonucleoside 5'-diphosphate. Its function is as follows. Involved in mRNA degradation. Catalyzes the phosphorolysis of single-stranded polyribonucleotides processively in the 3'- to 5'-direction. The protein is Polyribonucleotide nucleotidyltransferase of Halalkalibacterium halodurans (strain ATCC BAA-125 / DSM 18197 / FERM 7344 / JCM 9153 / C-125) (Bacillus halodurans).